A 343-amino-acid polypeptide reads, in one-letter code: N-acetyl-gamma-glutamyl-phosphate reductase (343 aa).

Residue Cys147 is part of the active site.

The protein belongs to the NAGSA dehydrogenase family. Type 1 subfamily.

Its subcellular location is the cytoplasm. It catalyses the reaction N-acetyl-L-glutamate 5-semialdehyde + phosphate + NADP(+) = N-acetyl-L-glutamyl 5-phosphate + NADPH + H(+). Its pathway is amino-acid biosynthesis; L-arginine biosynthesis; N(2)-acetyl-L-ornithine from L-glutamate: step 3/4. Its function is as follows. Catalyzes the NADPH-dependent reduction of N-acetyl-5-glutamyl phosphate to yield N-acetyl-L-glutamate 5-semialdehyde. This chain is N-acetyl-gamma-glutamyl-phosphate reductase, found in Listeria monocytogenes serovar 1/2a (strain ATCC BAA-679 / EGD-e).